Reading from the N-terminus, the 274-residue chain is Glutamate racemase (274 aa).

Residues 9 to 10 (DS) and 41 to 42 (YG) contribute to the substrate site. Cys-73 serves as the catalytic Proton donor/acceptor. 74-75 (NT) provides a ligand contact to substrate. The Proton donor/acceptor role is filled by Cys-183. 184 to 185 (TH) is a binding site for substrate.

This sequence belongs to the aspartate/glutamate racemases family.

It catalyses the reaction L-glutamate = D-glutamate. The protein operates within cell wall biogenesis; peptidoglycan biosynthesis. Functionally, provides the (R)-glutamate required for cell wall biosynthesis. This Shewanella baltica (strain OS195) protein is Glutamate racemase.